A 458-amino-acid chain; its full sequence is UDP-N-acetylmuramate--L-alanine ligase (458 aa).

118–124 (GTHGKTT) contacts ATP.

This sequence belongs to the MurCDEF family.

The protein localises to the cytoplasm. The catalysed reaction is UDP-N-acetyl-alpha-D-muramate + L-alanine + ATP = UDP-N-acetyl-alpha-D-muramoyl-L-alanine + ADP + phosphate + H(+). It participates in cell wall biogenesis; peptidoglycan biosynthesis. Its function is as follows. Cell wall formation. This is UDP-N-acetylmuramate--L-alanine ligase from Clostridium acetobutylicum (strain ATCC 824 / DSM 792 / JCM 1419 / IAM 19013 / LMG 5710 / NBRC 13948 / NRRL B-527 / VKM B-1787 / 2291 / W).